Consider the following 262-residue polypeptide: Aminoglycoside (3'') (9) adenylyltransferase (262 aa).

It catalyses the reaction streptomycin + ATP = 3''-O-adenylylstreptomycin + diphosphate. The catalysed reaction is spectinomycin + ATP = 9-O-adenylylspectinomycin + diphosphate. Mediates bacterial resistance to the antibiotics streptomycin and spectinomycin. The protein is Aminoglycoside (3'') (9) adenylyltransferase of Shigella flexneri.